We begin with the raw amino-acid sequence, 447 residues long: Rab GDP dissociation inhibitor alpha (447 aa).

It belongs to the Rab GDI family. Interacts with RHOH. Interacts with the non-phosphorylated forms of RAB1A, RAB3A, RAB5A, RAB5B, RAB5C, RAB8A, RAB8B, RAB10, RAB12, RAB35, and RAB43.

It is found in the cytoplasm. It localises to the golgi apparatus. The protein localises to the trans-Golgi network. Functionally, regulates the GDP/GTP exchange reaction of most Rab proteins by inhibiting the dissociation of GDP from them, and the subsequent binding of GTP to them. Promotes the dissociation of GDP-bound Rab proteins from the membrane and inhibits their activation. Promotes the dissociation of RAB1A, RAB3A, RAB5A and RAB10 from membranes. This is Rab GDP dissociation inhibitor alpha (GDI1) from Macaca fascicularis (Crab-eating macaque).